The chain runs to 248 residues: Probable transcriptional regulatory protein R02753 (248 aa).

Belongs to the TACO1 family.

Its subcellular location is the cytoplasm. In Rhizobium meliloti (strain 1021) (Ensifer meliloti), this protein is Probable transcriptional regulatory protein R02753.